Here is a 520-residue protein sequence, read N- to C-terminus: Membrane-bound glycerophospholipid O-acyltransferase 2 (520 aa).

Transmembrane regions (helical) follow at residues 22–42, 61–81, 88–108, 184–204, 237–257, and 264–284; these read PIDQVNFVVCQLFALLAAIWF, TLLGLYLALFCFGWYALHFLV, CIMIIIGVENMHNYCFVFALG, FMGILAGPLCSYKDYITFIEG, LLVCGLSLLFHLTICTTLPVE, and FQATASWPTKIIYLYISLLAA. Residues N342 and H373 contribute to the active site. The next 3 membrane-spanning stretches (helical) occupy residues 366 to 386, 416 to 436, and 444 to 464; these read FILSAIWHGVYPGYYLTFLTG, VITWIVTQVAISYTVVPFVLL, and FYSSWYYCLHILGILVLLLLP.

The protein belongs to the membrane-bound acyltransferase family. Expressed in neutrophils.

It is found in the endoplasmic reticulum membrane. It carries out the reaction a 1-acyl-sn-glycero-3-phosphocholine + an acyl-CoA = a 1,2-diacyl-sn-glycero-3-phosphocholine + CoA. The enzyme catalyses a 1-acyl-sn-glycero-3-phosphoethanolamine + an acyl-CoA = a 1,2-diacyl-sn-glycero-3-phosphoethanolamine + CoA. It catalyses the reaction a 1-acyl-sn-glycero-3-phosphate + an acyl-CoA = a 1,2-diacyl-sn-glycero-3-phosphate + CoA. The catalysed reaction is (9Z)-hexadecenoyl-CoA + 1-hexadecanoyl-sn-glycero-3-phosphocholine = 1-hexadecanoyl-2-(9Z-hexadecenoyl)-sn-glycero-3-phosphocholine + CoA. It carries out the reaction 1-hexadecanoyl-sn-glycero-3-phosphoethanolamine + (9Z)-octadecenoyl-CoA = 1-hexadecanoyl-2-(9Z-octadecenoyl)-sn-glycero-3-phosphoethanolamine + CoA. The enzyme catalyses 1-hexadecanoyl-sn-glycero-3-phosphoethanolamine + (9Z)-hexadecenoyl-CoA = 1-hexadecanoyl-2-(9Z)-hexadecenoyl-sn-glycero-3-phosphoethanolamine + CoA. It catalyses the reaction 1-(9Z-octadecenoyl)-sn-glycero-3-phospho-L-serine + hexadecanoyl-CoA = 1-(9Z)-octadecenoyl-2-hexadecanoyl-sn-glycero-3-phosphoserine + CoA. The catalysed reaction is (9Z,12Z)-octadecadienoyl-CoA + 1-hexadecanoyl-sn-glycero-3-phosphocholine = 1-hexadecanoyl-2-(9Z,12Z-octadecadienoyl)-sn-glycero-3-phosphocholine + CoA. It carries out the reaction 1-hexadecanoyl-sn-glycero-3-phosphocholine + (9Z)-octadecenoyl-CoA = 1-hexadecanoyl-2-(9Z-octadecenoyl)-sn-glycero-3-phosphocholine + CoA. The enzyme catalyses 1-hexadecanoyl-sn-glycero-3-phosphate + (9Z)-hexadecenoyl-CoA = 1-hexadecanoyl-2-[(9Z)-hexadec-9-enoyl]-sn-glycero-3-phosphate + CoA. It catalyses the reaction 1-hexadecanoyl-sn-glycero-3-phosphate + (9Z)-octadecenoyl-CoA = 1-hexadecanoyl-2-(9Z-octadecenoyl)-sn-glycero-3-phosphate + CoA. The catalysed reaction is a 1-O-(1Z-alkenyl)-sn-glycero-3-phosphocholine + (9Z)-octadecenoyl-CoA = 1-O-(1Z)-alkenyl-2-(9Z)-octadecenoyl-sn-glycero-3-phosphocholine + CoA. It carries out the reaction a 1-O-(1Z-alkenyl)-sn-glycero-3-phosphoethanolamine + (9Z)-octadecenoyl-CoA = 1-O-(1Z)-alkenyl-2-(9Z)-octadecenoyl-sn-glycero-3-phosphoethanolamine + CoA. The enzyme catalyses 1-octadecanoyl-sn-glycero-3-phosphoethanolamine + (9Z)-octadecenoyl-CoA = 1-octadecanoyl-2-(9Z-octadecenoyl)-sn-glycero-3-phosphoethanolamine + CoA. It catalyses the reaction 1-octadecanoyl-sn-glycero-3-phosphocholine + (9Z)-octadecenoyl-CoA = 1-octadecanoyl-2-(9Z-octadecenoyl)-sn-glycero-3-phosphocholine + CoA. The catalysed reaction is 1-(9Z-octadecenoyl)-sn-glycero-3-phosphoethanolamine + (9Z)-octadecenoyl-CoA = 1,2-di-(9Z-octadecenoyl)-sn-glycero-3-phosphoethanolamine + CoA. Its pathway is lipid metabolism; phospholipid metabolism. Its activity is regulated as follows. Partially inhibited by thimerosal. Acyltransferase which catalyzes the transfer of an acyl group from an acyl-CoA to a lysophospholipid leading to the production of a phospholipid and participates in the reacylation step of the phospholipid remodeling pathway also known as the Lands cycle. Catalyzes preferentially the acylation of lysophosphatidylethanolamine (1-acyl-sn-glycero-3-phosphoethanolamine or LPE) and lysophosphatidic acid (LPA) and to a lesser extend lysophosphatidylcholine (LPC) and lysophosphatidylserine (LPS). Prefers oleoyl-CoA as the acyl donor. May be involved in chondrocyte differentiation. The protein is Membrane-bound glycerophospholipid O-acyltransferase 2 of Homo sapiens (Human).